The following is a 117-amino-acid chain: Transcription elongation factor A protein-like 8 (117 aa).

2 stretches are compositionally biased toward basic and acidic residues: residues 1-10 and 61-75; these read MQKSCEENEG and FKEDTPVRHLDPEEM. The segment at 1-75 is disordered; the sequence is MQKSCEENEG…PVRHLDPEEM (75 aa). Residues 73–100 are a coiled coil; sequence EEMIRGVDELERLREEIRRVRNKFVMMH.

Belongs to the TFS-II family. TFA subfamily.

The protein resides in the nucleus. In terms of biological role, may be involved in transcriptional regulation. This Homo sapiens (Human) protein is Transcription elongation factor A protein-like 8 (TCEAL8).